The primary structure comprises 435 residues: Plant UBX domain-containing protein 6 (435 aa).

Disordered regions lie at residues 1–150, 208–265, and 311–352; these read MDVN…PQKV, ENYT…EDQP, and PTTT…SMSS. The segment covering 49 to 62 has biased composition (low complexity); the sequence is TSSFSTFDGSSGYS. Positions 112–129 are enriched in basic and acidic residues; the sequence is AVEHYGGEENRAIERPEQ. Low complexity predominate over residues 130–141; that stretch reads SSRSMSEETVSS. In terms of domain architecture, SEP 1 spans 150–211; the sequence is VFTHTVTSWS…IISREEENYT (62 aa). Residues 211–222 are compositionally biased toward polar residues; that stretch reads TESQAGSDSAST. Over residues 231-242 the composition is skewed to basic and acidic residues; sequence RAKESAIERSEQ. The span at 252-265 shows a compositional bias: acidic residues; it reads DSAELQEQQQEDQP. Residues 268–343 enclose the SEP 2 domain; that stretch reads VVTYTVTIWR…ESTSTEPPLT (76 aa). Composition is skewed to low complexity over residues 312 to 323 and 333 to 349; these read TTTRSTSCSSQT and SEST…QPPS. Residues 357-434 enclose the UBX domain; it reads PAAPTTSIQL…GIANSVLVQK (78 aa).

The chain is Plant UBX domain-containing protein 6 from Arabidopsis thaliana (Mouse-ear cress).